The chain runs to 37 residues: Cytochrome b6-f complex subunit 5 (37 aa).

The chain crosses the membrane as a helical span at residues 5–25 (LLSGIVPGLIPITLAGSFVIA).

The protein belongs to the PetG family. The 4 large subunits of the cytochrome b6-f complex are cytochrome b6, subunit IV (17 kDa polypeptide, PetD), cytochrome f and the Rieske protein, while the 4 small subunits are PetG, PetL, PetM and PetN. The complex functions as a dimer.

The protein resides in the plastid membrane. Functionally, component of the cytochrome b6-f complex, which mediates electron transfer between photosystem II (PSII) and photosystem I (PSI), cyclic electron flow around PSI, and state transitions. PetG is required for either the stability or assembly of the cytochrome b6-f complex. This chain is Cytochrome b6-f complex subunit 5, found in Aneura mirabilis (Parasitic liverwort).